A 631-amino-acid polypeptide reads, in one-letter code: Vacuolar-sorting receptor 6 (631 aa).

Positions 1–25 (MSLIHKGATLALFLALTMVVNGVFG) are cleaved as a signal peptide. Residues 26 to 563 (RFIVEKSSVT…CIERSGSRIG (538 aa)) are Lumenal-facing. The PA domain maps to 57 to 165 (NYGGYMIGSV…SFANTLKQAL (109 aa)). Residues asparagine 294 and asparagine 431 are each glycosylated (N-linked (GlcNAc...) asparagine). EGF-like domains follow at residues 413–463 (ETNE…TSCE) and 494–540 (ETSG…FECK). Intrachain disulfides connect cysteine 417–cysteine 435, cysteine 424–cysteine 444, cysteine 446–cysteine 462, cysteine 498–cysteine 511, and cysteine 530–cysteine 539. Residues 564–584 (WFPTFVILAAVASICVGGYVF) traverse the membrane as a helical segment. Topologically, residues 585 to 631 (YKYRLRSYMDSEIMAIMSQYMPLESQNTTDPMTGESQHQQLRLTSAA) are cytoplasmic. The Tyrosine-based internalization motif signature appears at 604 to 607 (YMPL). The interval 610 to 631 (QNTTDPMTGESQHQQLRLTSAA) is disordered.

Belongs to the VSR (BP-80) family. In terms of tissue distribution, expressed in seedlings, roots, leaves, flowers and siliques.

It localises to the membrane. The protein resides in the golgi apparatus membrane. It is found in the cytoplasmic vesicle. Its subcellular location is the clathrin-coated vesicle membrane. The protein localises to the prevacuolar compartment membrane. Its function is as follows. Vacuolar-sorting receptor (VSR) involved in clathrin-coated vesicles sorting from Golgi apparatus to vacuoles. The protein is Vacuolar-sorting receptor 6 (VSR6) of Arabidopsis thaliana (Mouse-ear cress).